A 412-amino-acid chain; its full sequence is Multidrug resistance protein MdtG (412 aa).

10 consecutive transmembrane segments (helical) span residues 20 to 40 (LFVA…IMPF), 62 to 82 (LVFS…GGLA), 96 to 116 (LGMS…QFLI), 119 to 139 (ALLG…ATQI), 150 to 170 (TLST…GLLA), 177 to 197 (PVFF…LYFI), 225 to 245 (VLCL…IAPI), 260 to 280 (LAFI…MSAP), 294 to 314 (ILVA…LVQT), and 382 to 402 (TVFF…YWCL).

Belongs to the major facilitator superfamily. DHA1 family. MdtG (TC 2.A.1.2.20) subfamily.

The protein localises to the cell inner membrane. The protein is Multidrug resistance protein MdtG of Rahnella sp. (strain Y9602).